The chain runs to 402 residues: Argininosuccinate synthase (402 aa).

Residues 11–19 and Ala-39 each bind ATP; that span reads AYSGGLDTS. Tyr-90 and Ser-95 together coordinate L-citrulline. Gly-120 provides a ligand contact to ATP. L-aspartate contacts are provided by Thr-122, Asn-126, and Asp-127. Asn-126 is a binding site for L-citrulline. The L-citrulline site is built by Arg-130, Ser-179, Ser-188, Glu-264, and Tyr-276.

The protein belongs to the argininosuccinate synthase family. Type 1 subfamily. As to quaternary structure, homotetramer.

Its subcellular location is the cytoplasm. The enzyme catalyses L-citrulline + L-aspartate + ATP = 2-(N(omega)-L-arginino)succinate + AMP + diphosphate + H(+). It participates in amino-acid biosynthesis; L-arginine biosynthesis; L-arginine from L-ornithine and carbamoyl phosphate: step 2/3. The protein is Argininosuccinate synthase of Roseiflexus castenholzii (strain DSM 13941 / HLO8).